A 360-amino-acid chain; its full sequence is Photosystem II protein D1 (360 aa).

3 consecutive transmembrane segments (helical) span residues 29–46 (YIGW…TATS), 118–133 (HFLT…EWEL), and 142–156 (WISV…AAAA). Residue histidine 118 coordinates chlorophyll a. Tyrosine 126 contributes to the pheophytin a binding site. Positions 170 and 189 each coordinate [CaMn4O5] cluster. Residues 197–218 (FHQLGVAGVFGGSLFSAMHGSL) traverse the membrane as a helical segment. Histidine 198 contributes to the chlorophyll a binding site. A quinone contacts are provided by residues histidine 215 and 264 to 265 (SF). A Fe cation-binding site is contributed by histidine 215. Residue histidine 272 participates in Fe cation binding. Residues 274–288 (FLGLWPVVGIWLTAL) traverse the membrane as a helical segment. 4 residues coordinate [CaMn4O5] cluster: histidine 332, glutamate 333, aspartate 342, and alanine 344. A propeptide spanning residues 345 to 360 (SGESLPVALTAPAVNG) is cleaved from the precursor.

The protein belongs to the reaction center PufL/M/PsbA/D family. PSII is composed of 1 copy each of membrane proteins PsbA, PsbB, PsbC, PsbD, PsbE, PsbF, PsbH, PsbI, PsbJ, PsbK, PsbL, PsbM, PsbT, PsbX, PsbY, PsbZ, Psb30/Ycf12, at least 3 peripheral proteins of the oxygen-evolving complex and a large number of cofactors. It forms dimeric complexes. The D1/D2 heterodimer binds P680, chlorophylls that are the primary electron donor of PSII, and subsequent electron acceptors. It shares a non-heme iron and each subunit binds pheophytin, quinone, additional chlorophylls, carotenoids and lipids. D1 provides most of the ligands for the Mn4-Ca-O5 cluster of the oxygen-evolving complex (OEC). There is also a Cl(-1) ion associated with D1 and D2, which is required for oxygen evolution. The PSII complex binds additional chlorophylls, carotenoids and specific lipids. is required as a cofactor. In terms of processing, tyr-161 forms a radical intermediate that is referred to as redox-active TyrZ, YZ or Y-Z. C-terminally processed by CTPA; processing is essential to allow assembly of the oxygen-evolving complex and thus photosynthetic growth.

It is found in the plastid. Its subcellular location is the chloroplast thylakoid membrane. It carries out the reaction 2 a plastoquinone + 4 hnu + 2 H2O = 2 a plastoquinol + O2. Its function is as follows. Photosystem II (PSII) is a light-driven water:plastoquinone oxidoreductase that uses light energy to abstract electrons from H(2)O, generating O(2) and a proton gradient subsequently used for ATP formation. It consists of a core antenna complex that captures photons, and an electron transfer chain that converts photonic excitation into a charge separation. The D1/D2 (PsbA/PsbD) reaction center heterodimer binds P680, the primary electron donor of PSII as well as several subsequent electron acceptors. The chain is Photosystem II protein D1 from Porphyra purpurea (Red seaweed).